We begin with the raw amino-acid sequence, 478 residues long: MSAITITTAKTLYDKLWDAHLVSQRDDGSSLIYIDRHLLHEVTSPQAFEGLALANREPWRLSANIATPDHNVPTVRKERLEGVSGIKDEVSRLQVKTLDDNCVKFNIAEFTINDVRQGIVHVVGPEQGLVLPGMTVVCGDSHTATHGALGCLAHGIGTSEVEHVLATQCLVQKKSKNMLIRVNGELGAGVTAKDVVLAIIAKIGTAGGTGYAIEFAGEVFENMSMEGRMTVCNMAIEAGARVGMVGVDETTIEYVKGRPFAPTGEQWDQAVEYWNTLHSDEGAHFDAIVELDASDIAPQVSWGTSPEMVVDVTQYVPTLAQAKDEVQAEAWERAYQYMGLEQGQPITDIKLDRIFIGSCTNSRIEDLRSAASVIKGRKVAANVKEAIVVAGSGQVKQQAEQEGLDKLFIEAGFEWREPGCSMCLAMNADKLEPQEHCASTSNRNFEGRQGNGGRTHLVSPAMAAAAALAGHFVDVRSF.

[4Fe-4S] cluster contacts are provided by Cys359, Cys420, and Cys423.

It belongs to the aconitase/IPM isomerase family. LeuC type 1 subfamily. As to quaternary structure, heterodimer of LeuC and LeuD. [4Fe-4S] cluster serves as cofactor.

The catalysed reaction is (2R,3S)-3-isopropylmalate = (2S)-2-isopropylmalate. The protein operates within amino-acid biosynthesis; L-leucine biosynthesis; L-leucine from 3-methyl-2-oxobutanoate: step 2/4. In terms of biological role, catalyzes the isomerization between 2-isopropylmalate and 3-isopropylmalate, via the formation of 2-isopropylmaleate. This chain is 3-isopropylmalate dehydratase large subunit, found in Psychrobacter sp. (strain PRwf-1).